The chain runs to 202 residues: Glycoprotein U22 (202 aa).

The N-terminal stretch at 1 to 20 (MVPQGCSLVWVSALYVSVIA) is a signal peptide. N-linked (GlcNAc...) asparagine; by host glycans are attached at residues N54, N107, N112, and N125. The chain crosses the membrane as a helical span at residues 172-192 (FVYYCISVYLFAVVVLCSCWF).

The protein resides in the membrane. The polypeptide is Glycoprotein U22 (U22) (Homo sapiens (Human)).